Here is a 952-residue protein sequence, read N- to C-terminus: Protein translocase subunit SecA (952 aa).

ATP-binding positions include Q135, 153–157 (GEGKT), and D575. The segment covering 916–930 (VSAKAATQPAAPAAK) has biased composition (low complexity). The interval 916-952 (VSAKAATQPAAPAAKEVGRNDPCPCGSGKKYKKCCGK) is disordered. Positions 938, 940, 949, and 950 each coordinate Zn(2+).

It belongs to the SecA family. As to quaternary structure, monomer and homodimer. Part of the essential Sec protein translocation apparatus which comprises SecA, SecYEG and auxiliary proteins SecDF. Other proteins may also be involved. It depends on Zn(2+) as a cofactor.

It is found in the cell membrane. The protein resides in the cytoplasm. It catalyses the reaction ATP + H2O + cellular proteinSide 1 = ADP + phosphate + cellular proteinSide 2.. In terms of biological role, part of the Sec protein translocase complex. Interacts with the SecYEG preprotein conducting channel. Has a central role in coupling the hydrolysis of ATP to the transfer of proteins into and across the cell membrane, serving as an ATP-driven molecular motor driving the stepwise translocation of polypeptide chains across the membrane. The protein is Protein translocase subunit SecA of Dehalococcoides mccartyi (strain ATCC BAA-2266 / KCTC 15142 / 195) (Dehalococcoides ethenogenes (strain 195)).